The chain runs to 343 residues: L-threonine 3-dehydrogenase (343 aa).

Residue Cys38 participates in Zn(2+) binding. Active-site charge relay system residues include Thr40 and His43. Positions 63, 64, 93, 96, 99, and 107 each coordinate Zn(2+). NAD(+)-binding positions include Ile176, Asp196, Arg201, Leu261–Ile263, and Ile286–Gly288.

This sequence belongs to the zinc-containing alcohol dehydrogenase family. As to quaternary structure, homotetramer. The cofactor is Zn(2+).

The protein localises to the cytoplasm. It catalyses the reaction L-threonine + NAD(+) = (2S)-2-amino-3-oxobutanoate + NADH + H(+). It participates in amino-acid degradation; L-threonine degradation via oxydo-reductase pathway; glycine from L-threonine: step 1/2. Catalyzes the NAD(+)-dependent oxidation of L-threonine to 2-amino-3-ketobutyrate. The protein is L-threonine 3-dehydrogenase of Thermus thermophilus (strain ATCC 27634 / DSM 579 / HB8).